A 114-amino-acid chain; its full sequence is Cytochrome b-c1 complex subunit 1, mitochondrial (114 aa).

At Lys-31 the chain carries N6-acetyllysine.

It belongs to the peptidase M16 family. UQCRC1/QCR1 subfamily. As to quaternary structure, component of the ubiquinol-cytochrome c oxidoreductase (cytochrome b-c1 complex, complex III, CIII), a multisubunit enzyme composed of 11 subunits. The complex is composed of 3 respiratory subunits cytochrome b, cytochrome c1 and Rieske protein UQCRFS1, 2 core protein subunits UQCRC1/QCR1 and UQCRC2/QCR2, and 6 low-molecular weight protein subunits UQCRH/QCR6, UQCRB/QCR7, UQCRQ/QCR8, UQCR10/QCR9, UQCR11/QCR10 and subunit 9, the cleavage product of Rieske protein UQCRFS1. The complex exists as an obligatory dimer and forms supercomplexes (SCs) in the inner mitochondrial membrane with NADH-ubiquinone oxidoreductase (complex I, CI) and cytochrome c oxidase (complex IV, CIV), resulting in different assemblies (supercomplex SCI(1)III(2)IV(1) and megacomplex MCI(2)III(2)IV(2)). Interacts with UQCC6. Interacts with STMP1.

It is found in the mitochondrion inner membrane. Component of the ubiquinol-cytochrome c oxidoreductase, a multisubunit transmembrane complex that is part of the mitochondrial electron transport chain which drives oxidative phosphorylation. The respiratory chain contains 3 multisubunit complexes succinate dehydrogenase (complex II, CII), ubiquinol-cytochrome c oxidoreductase (cytochrome b-c1 complex, complex III, CIII) and cytochrome c oxidase (complex IV, CIV), that cooperate to transfer electrons derived from NADH and succinate to molecular oxygen, creating an electrochemical gradient over the inner membrane that drives transmembrane transport and the ATP synthase. The cytochrome b-c1 complex catalyzes electron transfer from ubiquinol to cytochrome c, linking this redox reaction to translocation of protons across the mitochondrial inner membrane, with protons being carried across the membrane as hydrogens on the quinol. In the process called Q cycle, 2 protons are consumed from the matrix, 4 protons are released into the intermembrane space and 2 electrons are passed to cytochrome c. The 2 core subunits UQCRC1/QCR1 and UQCRC2/QCR2 are homologous to the 2 mitochondrial-processing peptidase (MPP) subunits beta-MPP and alpha-MPP respectively, and they seem to have preserved their MPP processing properties. May be involved in the in situ processing of UQCRFS1 into the mature Rieske protein and its mitochondrial targeting sequence (MTS)/subunit 9 when incorporated into complex III. Seems to play an important role in the maintenance of proper mitochondrial function in nigral dopaminergic neurons. This is Cytochrome b-c1 complex subunit 1, mitochondrial from Mesocricetus auratus (Golden hamster).